Reading from the N-terminus, the 192-residue chain is ADP-ribosylation factor-like protein 14 (192 aa).

The N-myristoyl glycine moiety is linked to residue Gly-2. GTP-binding positions include 20 to 27, 64 to 68, and 123 to 126; these read GLDSAGKS, DVGGQ, and NKQD.

Belongs to the small GTPase superfamily. Arf family. As to quaternary structure, interacts with ARL14EP. Expressed in immature dendritic cells.

It localises to the cytoplasmic vesicle. In terms of biological role, GTPase that recruits MYO1E to MHC class II-containing vesicles via the effector protein ARL14EP and hence controls the movement of these vesicles along the actin cytoskeleton in dendritic cells. In Homo sapiens (Human), this protein is ADP-ribosylation factor-like protein 14 (ARL14).